A 360-amino-acid polypeptide reads, in one-letter code: Nucleoporin SEH1 (360 aa).

6 WD repeats span residues 10–49 (DHKD…EWHC), 55–96 (THSG…SNDK), 111–152 (DSRT…NLSQ), 160–210 (SCKL…RKYA), 217–258 (TVTD…KELT), and 276–315 (NHNS…NWKC). Lysine 12 participates in a covalent cross-link: Glycyl lysine isopeptide (Lys-Gly) (interchain with G-Cter in SUMO2). Serine 190 bears the Phosphoserine mark. The span at 324–342 (SPVNGSSQQGNSNPSVGSN) shows a compositional bias: low complexity. A disordered region spans residues 324–360 (SPVNGSSQQGNSNPSVGSNIPSLQNSLNGSSAGRKHS). Polar residues predominate over residues 343–354 (IPSLQNSLNGSS).

The protein belongs to the WD repeat SEC13 family. In terms of assembly, component of the Nup107-160 subcomplex of the nuclear pore complex (NPC). The Nup107-160 subcomplex includes NUP160, NUP133, NUP107, NUP98, NUP85, NUP43, NUP37, SEH1 and SEC13. The SEH1 subunit appears to be only weakly associated with the Nup107-160 subcomplex. Component of the GATOR2 subcomplex, composed of MIOS, SEC13, SEH1L, WDR24 and WDR59. The GATOR2 complex interacts with CASTOR1 and CASTOR2; the interaction is negatively regulated by arginine. The GATOR2 complex interacts with SESN1, SESN2 and SESN3; the interaction is negatively regulated by amino acids. SESN1, SESN2 and SESN3 convey leucine availability via direct interaction with SEH1L and WDR24.

It is found in the chromosome. The protein localises to the centromere. It localises to the kinetochore. The protein resides in the nucleus. Its subcellular location is the nuclear pore complex. It is found in the lysosome membrane. Its activity is regulated as follows. The GATOR2 complex is negatively regulated by the upstream amino acid sensors CASTOR1 and SESN2, which sequester the GATOR2 complex in absence of amino acids. In the presence of abundant amino acids, GATOR2 is released from CASTOR1 and SESN2 and activated. Its function is as follows. Component of the Nup107-160 subcomplex of the nuclear pore complex (NPC). The Nup107-160 subcomplex is required for the assembly of a functional NPC. The Nup107-160 subcomplex is also required for normal kinetochore microtubule attachment, mitotic progression and chromosome segregation. This subunit plays a role in recruitment of the Nup107-160 subcomplex to the kinetochore. In terms of biological role, as a component of the GATOR2 complex, functions as an activator of the amino acid-sensing branch of the mTORC1 signaling pathway. The GATOR2 complex indirectly activates mTORC1 through the inhibition of the GATOR1 subcomplex. GATOR2 probably acts as an E3 ubiquitin-protein ligase toward GATOR1. In the presence of abundant amino acids, the GATOR2 complex mediates ubiquitination of the NPRL2 core component of the GATOR1 complex, leading to GATOR1 inactivation. In the absence of amino acids, GATOR2 is inhibited, activating the GATOR1 complex. Within the GATOR2 complex, SEC13 and SEH1L are required to stabilize the complex. This Bos taurus (Bovine) protein is Nucleoporin SEH1 (SEH1L).